Consider the following 272-residue polypeptide: Probable protein VP2 (272 aa).

Disordered regions lie at residues 50–116 (GGSR…DFAD) and 195–272 (YSPA…SSSS). Residues 78-90 (APDPPAGNQPPAL) show a composition bias toward pro residues. Positions 94-108 (GDGGNESGAGGGESG) are enriched in gly residues. Positions 218–230 (SKRDNKENRDRGR) are enriched in basic and acidic residues. Positions 231 to 246 (AKARAKQKPKKRRRRA) are enriched in basic residues. Residues 249–272 (ESSSSSSSKSSFNSEEGSSASSSS) show a composition bias toward low complexity.

Phosphorylated at C-terminal serines.

This Homo sapiens (Human) protein is Probable protein VP2.